The sequence spans 204 residues: Rho GDP-dissociation inhibitor 1 (204 aa).

The interval 1–36 is disordered; sequence MAEQEPTAEQLAQIAAENEEDEHSVNYKPPAQKSIQ. Position 2 is an N-acetylalanine (alanine 2). Position 34 is a phosphoserine (serine 34). At lysine 43 the chain carries N6-acetyllysine. The residue at position 47 (serine 47) is a Phosphoserine. The segment at 66 to 83 is hydrophobic; the sequence is NVPNVVVTRLTLVCSTAP. At serine 101 the chain carries Phosphoserine; by PKA. The residue at position 105 (lysine 105) is an N6-acetyllysine. A Phosphoserine; by PKC modification is found at serine 115. Lysine 127 is modified (N6-acetyllysine). Residues lysine 138 and lysine 141 each participate in a glycyl lysine isopeptide (Lys-Gly) (interchain with G-Cter in SUMO1); alternate cross-link. Glycyl lysine isopeptide (Lys-Gly) (interchain with G-Cter in SUMO2); alternate cross-links involve residues lysine 138 and lysine 141. An N6-acetyllysine; alternate modification is found at lysine 141. Lysine 141 carries the N6-succinyllysine; alternate modification. Residue lysine 178 is modified to N6-acetyllysine.

Belongs to the Rho GDI family. As to quaternary structure, monomer. Interacts with FER. Interacts with PLXNB3. Forms a heterodimer with RAC1. Interacts with RHOA, the affinity is increased by three orders of magnitude when RHOA is prenylated. Interacts with PSMD10; the interaction increases ARHGDIA association with RHOA, leading to ARHGDIA-mediated inactivation of RHOA and ROCK and prolonged AKT activation. Interacts with KANK2; the interaction is direct and may regulate the interaction of ARHGDIA with RHOA, RAC1 and CDC42. Interacts with RHOC. Interacts with CDC42. Interacts with NGFR (via death domain); NGFR binding decreases the affinity for RHOA. Brain, lung, thymus, spleen, small intestine, and kidney, and weakly in heart and liver.

It localises to the cytoplasm. Its function is as follows. Controls Rho proteins homeostasis. Regulates the GDP/GTP exchange reaction of the Rho proteins by inhibiting the dissociation of GDP from them, and the subsequent binding of GTP to them. Retains Rho proteins such as CDC42, RAC1 and RHOA in an inactive cytosolic pool, regulating their stability and protecting them from degradation. Actively involved in the recycling and distribution of activated Rho GTPases in the cell, mediates extraction from membranes of both inactive and activated molecules due its exceptionally high affinity for prenylated forms. Through the modulation of Rho proteins, may play a role in cell motility regulation. In glioma cells, inhibits cell migration and invasion by mediating the signals of SEMA5A and PLXNB3 that lead to inactivation of RAC1. This Bos taurus (Bovine) protein is Rho GDP-dissociation inhibitor 1 (ARHGDIA).